Reading from the N-terminus, the 433-residue chain is Tubulin epsilon and delta complex protein 2 (433 aa).

Disordered stretches follow at residues 45 to 69 (TGTRALKPPPGPETNGEDPLPACTP), 95 to 169 (TKAG…VGMG), and 326 to 345 (QPPRPCPVGRPPGASPSCGG). Polar residues predominate over residues 107 to 120 (KSRSIVTSSGTTAS). Ser-159 bears the Phosphoserine mark. Over residues 327 to 339 (PPRPCPVGRPPGA) the composition is skewed to pro residues.

In terms of assembly, interacts with TEDC1. Found in a complex with TEDC1, TEDC2, TUBE1 and TUBD1.

It is found in the cell projection. Its subcellular location is the cilium. The protein localises to the cytoplasm. It localises to the cytoskeleton. The protein resides in the microtubule organizing center. It is found in the centrosome. Its subcellular location is the centriole. In terms of biological role, acts as a positive regulator of ciliary hedgehog signaling. Required for centriole stability. In Homo sapiens (Human), this protein is Tubulin epsilon and delta complex protein 2.